The following is a 941-amino-acid chain: Protein translocase subunit SecA (941 aa).

ATP contacts are provided by residues glutamine 87, 105 to 109, and aspartate 524; that span reads GEGKT. The tract at residues 871–919 is disordered; it reads DEQPPMPAMEAHKLDPNTGEDQVAQAQSGLAPVAPAKRDPANPATWGKV. Positions 925, 927, 936, and 937 each coordinate Zn(2+).

Belongs to the SecA family. As to quaternary structure, monomer and homodimer. Part of the essential Sec protein translocation apparatus which comprises SecA, SecYEG and auxiliary proteins SecDF-YajC and YidC. Zn(2+) is required as a cofactor.

It localises to the cell inner membrane. Its subcellular location is the cytoplasm. It catalyses the reaction ATP + H2O + cellular proteinSide 1 = ADP + phosphate + cellular proteinSide 2.. Part of the Sec protein translocase complex. Interacts with the SecYEG preprotein conducting channel. Has a central role in coupling the hydrolysis of ATP to the transfer of proteins into and across the cell membrane, serving both as a receptor for the preprotein-SecB complex and as an ATP-driven molecular motor driving the stepwise translocation of polypeptide chains across the membrane. This Afipia carboxidovorans (strain ATCC 49405 / DSM 1227 / KCTC 32145 / OM5) (Oligotropha carboxidovorans) protein is Protein translocase subunit SecA.